The chain runs to 201 residues: uncharacterized protein (201 aa).

The protein belongs to the mimivirus L885/R898 family.

This is an uncharacterized protein from Acanthamoeba polyphaga (Amoeba).